We begin with the raw amino-acid sequence, 378 residues long: uncharacterized protein (378 aa).

Residue cysteine 16 is the For GATase activity of the active site. One can recognise a Glutamine amidotransferase type-2 domain in the interval 16-378 (CGLFGVIDRS…ELAKQLSEVE (363 aa)).

This is an uncharacterized protein from Archaeoglobus fulgidus (strain ATCC 49558 / DSM 4304 / JCM 9628 / NBRC 100126 / VC-16).